A 147-amino-acid chain; its full sequence is MAKEVAGQIKLQIKGGAANPSPPVGPALGSKGINIMEFCKQFNAKTQDKAGKILPVVITYYADKSFDFVVKTPPVAIQLLEATKKKSGSAQPNRAKIAEITWDQVKAIAEDKLVDLNCFTVESAMRMVAGTARSMGITVKGTFPGNN.

This sequence belongs to the universal ribosomal protein uL11 family. In terms of assembly, part of the ribosomal stalk of the 50S ribosomal subunit. Interacts with L10 and the large rRNA to form the base of the stalk. L10 forms an elongated spine to which L12 dimers bind in a sequential fashion forming a multimeric L10(L12)X complex. Post-translationally, one or more lysine residues are methylated.

Its function is as follows. Forms part of the ribosomal stalk which helps the ribosome interact with GTP-bound translation factors. This chain is Large ribosomal subunit protein uL11, found in Parabacteroides distasonis (strain ATCC 8503 / DSM 20701 / CIP 104284 / JCM 5825 / NCTC 11152).